We begin with the raw amino-acid sequence, 345 residues long: Eukaryotic translation initiation factor 3 subunit F (345 aa).

The MPN domain occupies 30-166; it reads VVIQPQALFS…TRAYISAPVG (137 aa). The tract at residues 308-345 is disordered; the sequence is GGESGSTESGQRGGQRGGKGGRGGQQRNQERSGEEVRA. Residues 318–331 are compositionally biased toward gly residues; sequence QRGGQRGGKGGRGG. The segment covering 335–345 has biased composition (basic and acidic residues); it reads NQERSGEEVRA.

It belongs to the eIF-3 subunit F family. Component of the eukaryotic translation initiation factor 3 (eIF-3) complex.

The protein resides in the cytoplasm. Its function is as follows. Component of the eukaryotic translation initiation factor 3 (eIF-3) complex, which is involved in protein synthesis of a specialized repertoire of mRNAs and, together with other initiation factors, stimulates binding of mRNA and methionyl-tRNAi to the 40S ribosome. The eIF-3 complex specifically targets and initiates translation of a subset of mRNAs involved in cell proliferation. This chain is Eukaryotic translation initiation factor 3 subunit F, found in Aspergillus terreus (strain NIH 2624 / FGSC A1156).